A 607-amino-acid polypeptide reads, in one-letter code: Glutamyl-tRNA(Gln) amidotransferase subunit E (607 aa).

Belongs to the GatB/GatE family. GatE subfamily. As to quaternary structure, heterodimer of GatD and GatE.

The catalysed reaction is L-glutamyl-tRNA(Gln) + L-glutamine + ATP + H2O = L-glutaminyl-tRNA(Gln) + L-glutamate + ADP + phosphate + H(+). Allows the formation of correctly charged Gln-tRNA(Gln) through the transamidation of misacylated Glu-tRNA(Gln) in organisms which lack glutaminyl-tRNA synthetase. The reaction takes place in the presence of glutamine and ATP through an activated gamma-phospho-Glu-tRNA(Gln). The GatDE system is specific for glutamate and does not act on aspartate. This is Glutamyl-tRNA(Gln) amidotransferase subunit E from Pyrobaculum islandicum (strain DSM 4184 / JCM 9189 / GEO3).